The sequence spans 79 residues: Small ribosomal subunit protein bS16cz (79 aa).

Belongs to the bacterial ribosomal protein bS16 family.

Its subcellular location is the plastid. The protein localises to the chloroplast. The polypeptide is Small ribosomal subunit protein bS16cz (Arabidopsis thaliana (Mouse-ear cress)).